Here is a 285-residue protein sequence, read N- to C-terminus: NADPH-dependent 7-cyano-7-deazaguanine reductase (285 aa).

91-93 contributes to the substrate binding site; that stretch reads IES. 93–94 provides a ligand contact to NADPH; sequence SK. Cys193 (thioimide intermediate) is an active-site residue. The active-site Proton donor is Asp200. A substrate-binding site is contributed by 232–233; that stretch reads HE. 261–262 serves as a coordination point for NADPH; sequence RG.

It belongs to the GTP cyclohydrolase I family. QueF type 2 subfamily. As to quaternary structure, homodimer.

The protein localises to the cytoplasm. It carries out the reaction 7-aminomethyl-7-carbaguanine + 2 NADP(+) = 7-cyano-7-deazaguanine + 2 NADPH + 3 H(+). The protein operates within tRNA modification; tRNA-queuosine biosynthesis. In terms of biological role, catalyzes the NADPH-dependent reduction of 7-cyano-7-deazaguanine (preQ0) to 7-aminomethyl-7-deazaguanine (preQ1). The polypeptide is NADPH-dependent 7-cyano-7-deazaguanine reductase (Shewanella baltica (strain OS223)).